The sequence spans 496 residues: MSGAITCSAADLSALLGPNATAAADYICGQLGSVNNKFTDAAYAIDNTYLLFSAYLVFAMQLGFAMLCAGSVRAKNTMNIMLTNVLDAAAGGLFYYLFGYAFAFGESSDGFIGRHNFGLQNFPTLTSDYSFFLYQWAFAIAAAGITSGSIAERTKFVAYLIYSSFLTGFVYPVVSHWFWSPDGWASPFRSEDRLFGTGAIDFAGSGVVHMVGGIAGLWGALIEGPRIGRFPDGGHAIALRGHSASLVVLGTFLLWFGWYGFNPGSFTKILIPYNSGSNYGQWSGIGRTAVTTTLSGCTAALTTLFGKRLLSGHWNVTDVCNGLLGGFAAITAGCSVVDPWAAIVCGFVASLVLIGCNKLAELLKYDDPLEAAQLHGGCGAWGLIFVGLFAKEKYINEVYGASPGRHYGLFMGGGGKLLGAQLVQIIVIVGWVSATMGTLFFILKKLNLLRISEQHEMRGMDLAGHGGFAYIYHDNDDDSIGVPGSPVPRAPNPPAV.

The next 11 membrane-spanning stretches (helical) occupy residues 50-70, 85-105, 131-151, 156-176, 202-222, 246-266, 284-306, 314-334, 336-356, 369-389, and 422-442; these read LLFSAYLVFAMQLGFAMLCAG, VLDAAAGGLFYYLFGYAFAFG, FFLYQWAFAIAAAGITSGSIA, FVAYLIYSSFLTGFVYPVVSH, FAGSGVVHMVGGIAGLWGALI, LVVLGTFLLWFGWYGFNPGSF, GIGRTAVTTTLSGCTAALTTLFG, WNVTDVCNGLLGGFAAITAGC, VVDPWAAIVCGFVASLVLIGC, LEAAQLHGGCGAWGLIFVGLF, and LVQIIVIVGWVSATMGTLFFI. Residue S485 is modified to Phosphoserine.

It belongs to the ammonia transporter channel (TC 1.A.11.2) family.

Its subcellular location is the membrane. Functionally, involved in ammonium transport. This Arabidopsis thaliana (Mouse-ear cress) protein is Putative ammonium transporter 1 member 5 (AMT1-5).